The primary structure comprises 193 residues: Interleukin-18 (193 aa).

A propeptide spanning residues 1-36 (MAANLIEDNCINLVKMKFVNNTLYFKAESDEGLESD) is cleaved from the precursor.

Belongs to the IL-1 family. In terms of assembly, forms a ternary complex with ligand-binding receptor subunit IL18R1 and signaling receptor subunit IL18RAP at the plasma membrane. Mature IL18 first binds to IL18R1 forming a low affinity binary complex, which then interacts with IL18RAP to form a high affinity ternary complex that signals inside the cell. Interacts with cargo receptor TMED10; the interaction mediates the translocation from the cytoplasm into the ERGIC (endoplasmic reticulum-Golgi intermediate compartment) and thereby secretion. The pro-IL-18 precursor is processed by CASP1, CASP4 or CASP5 to yield its mature, active form. The pro-IL-18 precursor features autoinhibitory interactions between the propeptide and the post-cleavage-site region, preventing recognition by the IL18R1 receptor. Processing by CASP1, CASP4 or CASP5 induces conformational changes to generate critical receptor-binding sites. The mature form is then secreted and released in the extracellular milieu by passing through the gasdermin-D (GSDMD) pore. In contrast, cleavage by CASP3 inactivates IL18.

It is found in the cytoplasm. The protein localises to the cytosol. It localises to the secreted. Functionally, pro-inflammatory cytokine primarily involved in epithelial barrier repair, polarized T-helper 1 (Th1) cell and natural killer (NK) cell immune responses. Upon binding to IL18R1 and IL18RAP, forms a signaling ternary complex which activates NF-kappa-B, triggering synthesis of inflammatory mediators. Synergizes with IL12/interleukin-12 to induce IFNG synthesis from T-helper 1 (Th1) cells and natural killer (NK) cells. Involved in transduction of inflammation downstream of pyroptosis: its mature form is specifically released in the extracellular milieu by passing through the gasdermin-D (GSDMD) pore. The protein is Interleukin-18 (IL18) of Canis lupus familiaris (Dog).